A 273-amino-acid polypeptide reads, in one-letter code: Medium-wave-sensitive opsin 1 (273 aa).

Topologically, residues 1–5 are extracellular; sequence APRWV. A helical transmembrane segment spans residues 6–30; the sequence is YHLTSAWMVFVVIASVFTNGLVLAA. The Cytoplasmic segment spans residues 31 to 42; sequence TMRFKKLRHPLN. A helical transmembrane segment spans residues 43 to 68; sequence WILVNLAIADLVETIIASTISVVNQM. Residues 69 to 82 are Extracellular-facing; the sequence is YGYFVLGHPLCVVE. A disulfide bridge links C79 with C156. A helical transmembrane segment spans residues 83 to 102; the sequence is GYTASLCGITGLWSLAIISW. Residues 103 to 121 lie on the Cytoplasmic side of the membrane; sequence ERWMVVCRPFGNVRFDAKL. A helical transmembrane segment spans residues 122-145; that stretch reads AIAGIAFSWIWAAVWTAPPIFGWS. The Extracellular portion of the chain corresponds to 146-171; sequence RYWPHGLKTSCGPDVFSGSSYPGVQS. Residues 172-199 form a helical membrane-spanning segment; the sequence is YMIVLMITCCFIPLSVIVLCYLQVWLAI. At 200–221 the chain is on the cytoplasmic side; it reads RAVAKQQKESESTQKAEKEVTR. Residues 222 to 245 form a helical membrane-spanning segment; that stretch reads MVMVMIFAFCLCWGPYAFFACFAA. The Extracellular segment spans residues 246–253; that stretch reads AHPGYAFH. The chain crosses the membrane as a helical span at residues 254 to 273; it reads PLVAALPAYFAKSATIYNPI. The residue at position 265 (K265) is an N6-(retinylidene)lysine.

Belongs to the G-protein coupled receptor 1 family. Opsin subfamily. In terms of assembly, monomer. Homodimer. Homotetramer. In terms of processing, O-glycosylated. Post-translationally, phosphorylated on some or all of the serine and threonine residues present in the C-terminal region. As to expression, the three color pigments are found in the cone photoreceptor cells.

It is found in the membrane. Its function is as follows. Visual pigments are the light-absorbing molecules that mediate vision. They consist of an apoprotein, opsin, covalently linked to cis-retinal. This Odocoileus virginianus virginianus (Virginia white-tailed deer) protein is Medium-wave-sensitive opsin 1 (OPN1MW).